A 449-amino-acid polypeptide reads, in one-letter code: Cysteine--tRNA ligase (449 aa).

A Zn(2+)-binding site is contributed by C29. Residues 31–41 carry the 'HIGH' region motif; it reads PTVYDHLHIGN. Zn(2+)-binding residues include C211, H236, and E240. Residues 269–273 carry the 'KMSKS' region motif; the sequence is KMSKS. K272 is an ATP binding site.

The protein belongs to the class-I aminoacyl-tRNA synthetase family. Monomer. The cofactor is Zn(2+).

The protein resides in the cytoplasm. It catalyses the reaction tRNA(Cys) + L-cysteine + ATP = L-cysteinyl-tRNA(Cys) + AMP + diphosphate. The sequence is that of Cysteine--tRNA ligase from Methylocella silvestris (strain DSM 15510 / CIP 108128 / LMG 27833 / NCIMB 13906 / BL2).